A 314-amino-acid chain; its full sequence is 4-hydroxy-3-methylbut-2-enyl diphosphate reductase (314 aa).

Residue C12 participates in [4Fe-4S] cluster binding. Residues H43 and H81 each coordinate (2E)-4-hydroxy-3-methylbut-2-enyl diphosphate. Positions 43 and 81 each coordinate dimethylallyl diphosphate. H43 and H81 together coordinate isopentenyl diphosphate. Residue C103 participates in [4Fe-4S] cluster binding. H131 contributes to the (2E)-4-hydroxy-3-methylbut-2-enyl diphosphate binding site. H131 is a dimethylallyl diphosphate binding site. H131 provides a ligand contact to isopentenyl diphosphate. Catalysis depends on E133, which acts as the Proton donor. Residue T170 participates in (2E)-4-hydroxy-3-methylbut-2-enyl diphosphate binding. Position 198 (C198) interacts with [4Fe-4S] cluster. Positions 226, 228, and 271 each coordinate (2E)-4-hydroxy-3-methylbut-2-enyl diphosphate. S226, N228, and S271 together coordinate dimethylallyl diphosphate. Residues S226, N228, and S271 each contribute to the isopentenyl diphosphate site.

This sequence belongs to the IspH family. [4Fe-4S] cluster serves as cofactor.

The catalysed reaction is isopentenyl diphosphate + 2 oxidized [2Fe-2S]-[ferredoxin] + H2O = (2E)-4-hydroxy-3-methylbut-2-enyl diphosphate + 2 reduced [2Fe-2S]-[ferredoxin] + 2 H(+). It catalyses the reaction dimethylallyl diphosphate + 2 oxidized [2Fe-2S]-[ferredoxin] + H2O = (2E)-4-hydroxy-3-methylbut-2-enyl diphosphate + 2 reduced [2Fe-2S]-[ferredoxin] + 2 H(+). The protein operates within isoprenoid biosynthesis; dimethylallyl diphosphate biosynthesis; dimethylallyl diphosphate from (2E)-4-hydroxy-3-methylbutenyl diphosphate: step 1/1. It participates in isoprenoid biosynthesis; isopentenyl diphosphate biosynthesis via DXP pathway; isopentenyl diphosphate from 1-deoxy-D-xylulose 5-phosphate: step 6/6. Functionally, catalyzes the conversion of 1-hydroxy-2-methyl-2-(E)-butenyl 4-diphosphate (HMBPP) into a mixture of isopentenyl diphosphate (IPP) and dimethylallyl diphosphate (DMAPP). Acts in the terminal step of the DOXP/MEP pathway for isoprenoid precursor biosynthesis. This chain is 4-hydroxy-3-methylbut-2-enyl diphosphate reductase, found in Bacillus licheniformis (strain ATCC 14580 / DSM 13 / JCM 2505 / CCUG 7422 / NBRC 12200 / NCIMB 9375 / NCTC 10341 / NRRL NRS-1264 / Gibson 46).